Reading from the N-terminus, the 350-residue chain is Anthranilate phosphoribosyltransferase (350 aa).

Residues Gly94, 97–98, Thr102, 104–107, 122–130, and Ser134 contribute to the 5-phospho-alpha-D-ribose 1-diphosphate site; these read GD, NIST, and KHGNRSVSS. Gly94 provides a ligand contact to anthranilate. Mg(2+) is bound at residue Ser106. Asn125 contacts anthranilate. Arg180 provides a ligand contact to anthranilate. The Mg(2+) site is built by Asp239 and Glu240.

This sequence belongs to the anthranilate phosphoribosyltransferase family. In terms of assembly, homodimer. It depends on Mg(2+) as a cofactor.

It carries out the reaction N-(5-phospho-beta-D-ribosyl)anthranilate + diphosphate = 5-phospho-alpha-D-ribose 1-diphosphate + anthranilate. It functions in the pathway amino-acid biosynthesis; L-tryptophan biosynthesis; L-tryptophan from chorismate: step 2/5. Its function is as follows. Catalyzes the transfer of the phosphoribosyl group of 5-phosphorylribose-1-pyrophosphate (PRPP) to anthranilate to yield N-(5'-phosphoribosyl)-anthranilate (PRA). The sequence is that of Anthranilate phosphoribosyltransferase from Geotalea daltonii (strain DSM 22248 / JCM 15807 / FRC-32) (Geobacter daltonii).